Here is a 321-residue protein sequence, read N- to C-terminus: Probable cell division protein WhiA (321 aa).

The H-T-H motif DNA-binding region spans 276–309; sequence NLKELGELLEPPVGKSGVNHRLRKLEKIAEQLHQ.

The protein belongs to the WhiA family.

In terms of biological role, involved in cell division and chromosome segregation. The protein is Probable cell division protein WhiA of Natranaerobius thermophilus (strain ATCC BAA-1301 / DSM 18059 / JW/NM-WN-LF).